A 172-amino-acid polypeptide reads, in one-letter code: Translation initiation factor IF-3 (172 aa).

It belongs to the IF-3 family. As to quaternary structure, monomer.

The protein resides in the cytoplasm. Functionally, IF-3 binds to the 30S ribosomal subunit and shifts the equilibrium between 70S ribosomes and their 50S and 30S subunits in favor of the free subunits, thus enhancing the availability of 30S subunits on which protein synthesis initiation begins. This is Translation initiation factor IF-3 from Campylobacter concisus (strain 13826).